We begin with the raw amino-acid sequence, 483 residues long: Altronate oxidoreductase (483 aa).

18 to 29 (IIQFGEGNFLRA) lines the NAD(+) pocket.

It belongs to the mannitol dehydrogenase family. UxaB subfamily.

It catalyses the reaction D-altronate + NAD(+) = keto-D-tagaturonate + NADH + H(+). It participates in carbohydrate metabolism; pentose and glucuronate interconversion. In Escherichia coli O17:K52:H18 (strain UMN026 / ExPEC), this protein is Altronate oxidoreductase.